The sequence spans 442 residues: UDP-N-acetylglucosamine--peptide N-acetylglucosaminyltransferase stabilizing protein GtfB (442 aa).

The protein belongs to the GtfB family. As to quaternary structure, interacts with glycosyltransferase GtfA (Gtf1). Interacts with glycosyltransferase GtfA; probably forms a heterotetramer with 2 subunits each of GtfA and GtfB. Part of the accessory SecA2/SecY2 protein translocation apparatus.

Its subcellular location is the cell membrane. It functions in the pathway protein modification; protein glycosylation. Functionally, required for the polymorphic O-glycosylation of the serine-rich repeat protein Srr2. A stabilizing protein that is part of the accessory SecA2/SecY2 system specifically required to export serine-rich repeat proteins, probably Srr2 in this organism. The GtfA-GtfB (Gtf1-Gtf2 in this bacteria) complex adds GlcNAc from UDP-GlcNAc to Srr2 substrate, attaching the first sugar residue. Stabilizes the glycosylation activity of GtfA in vivo. Upon expression in a gtfB deletion mutant of S.parasanguis, GtfB confers incorrect glycosylation and partial complementation of a biofilm formation defect, while GtfA/GtfB restores correct expression of serine-rich repeat protein Fap1 and completely restores a biofilm formation defect in a S.parasanguis double gtfA-gtfB deletion. This Streptococcus agalactiae protein is UDP-N-acetylglucosamine--peptide N-acetylglucosaminyltransferase stabilizing protein GtfB.